A 100-amino-acid chain; its full sequence is NADH-quinone oxidoreductase subunit K (100 aa).

3 consecutive transmembrane segments (helical) span residues 4 to 24 (MQHG…GLLI), 28 to 48 (LIFM…AWVV), and 60 to 80 (IFYL…LALL).

The protein belongs to the complex I subunit 4L family. NDH-1 is composed of 13 different subunits. Subunits NuoA, H, J, K, L, M, N constitute the membrane sector of the complex.

Its subcellular location is the cell membrane. The enzyme catalyses a quinone + NADH + 5 H(+)(in) = a quinol + NAD(+) + 4 H(+)(out). In terms of biological role, NDH-1 shuttles electrons from NADH, via FMN and iron-sulfur (Fe-S) centers, to quinones in the respiratory chain. The immediate electron acceptor for the enzyme in this species is believed to be ubiquinone. Couples the redox reaction to proton translocation (for every two electrons transferred, four hydrogen ions are translocated across the cytoplasmic membrane), and thus conserves the redox energy in a proton gradient. This is NADH-quinone oxidoreductase subunit K from Hamiltonella defensa subsp. Acyrthosiphon pisum (strain 5AT).